Reading from the N-terminus, the 40-residue chain is U2-myrmicitoxin-Tb1a (40 aa).

The signal sequence occupies residues 1-3; it reads AEA. The propeptide occupies 4–29; it reads MAEAMADAMADAMADAMADAMAEAAA. Arginine amide is present on R39.

It belongs to the formicidae venom precursor-01 superfamily. Expressed by the venom gland.

The protein resides in the secreted. Venom protein with unknown function. Does not induce paralysis when a high dose is administered by intrathoracic injection into the blowfly Lucilia caesar. This is U2-myrmicitoxin-Tb1a from Tetramorium bicarinatum (Tramp ant).